The following is a 121-amino-acid chain: Small ribosomal subunit protein uS13 (121 aa).

A disordered region spans residues 97–121 (VRGQRTRTNARTRRGARKTVAGKKK). Residues 100 to 121 (QRTRTNARTRRGARKTVAGKKK) show a composition bias toward basic residues.

Belongs to the universal ribosomal protein uS13 family. In terms of assembly, part of the 30S ribosomal subunit. Forms a loose heterodimer with protein S19. Forms two bridges to the 50S subunit in the 70S ribosome.

Located at the top of the head of the 30S subunit, it contacts several helices of the 16S rRNA. In the 70S ribosome it contacts the 23S rRNA (bridge B1a) and protein L5 of the 50S subunit (bridge B1b), connecting the 2 subunits; these bridges are implicated in subunit movement. Contacts the tRNAs in the A and P-sites. In Synechococcus sp. (strain CC9902), this protein is Small ribosomal subunit protein uS13.